The following is a 1032-amino-acid chain: MADTPSVAVQAPPGYGKTELFHLPLIALASKGDVKYVSFLFVPYTVLLANCMIRLGRCGCLNVAPVRNFIEEGCDGVTDLYVGIYDDLASTNFTDRIAAWENIVECTFRTNNVKLGYLIVDEFHNFETEVYRQSQFGGITNLDFDAFEKAIFLSGTAPEAVADAALQRIGLTGLAKKSMDINELKRSEDLSRGLSSYPTRMFNLIKEKSEVPLGHVHKIWKKVESQPEEALKLLLALFEIEPESKAIVVASTTNEVEELACSWRKYFRVVWIHGKLGAAEKVSRTKEFVTDGSMRVLIGTKLVTEGIDIKQLMMVIMLDNRLNIIELIQGVGRLRDGGLCYLLSRKNSWAARNRKGELPPIKEGCITEQVREFYGLESKKGKKGQHVGCCGSRTDLSADTVELIERMDRLAEKQATASMSIVALPSSFQESNSSDRCRKYCSSDEDSNTCIHGSANASTNATTNSSTNATTTASTNVRTSATTTASINVRTSATTTESTNSSTNATTTASTNVRTSATTTASINVRTSATTTESTNSNTSATTTESTDSNTSATTTESTNSSTNATTTASINVRTSATTTESTNSNTNATTTESTNSSTNATTTEGTNSNTSATTTASTNSSTNATTTESTNASAKEDANKDGNAEDNRFHPVTDINKESYKRKGSQMVLLERKKLKAQFPNTSENMNVLQFLGFRSDEIKHLFLYGIDVYFCPEGVFTQYGLCKGCQKMFELCVCWAGQKVSYRRMAWEALAVERMLRNDEEYKEYLEDIEPYHGDPVGYLKYFSVKRGEIYSQIQRNYAWYLAITRRRETISVLDSTRGKQGSQVFRMSGRQIKELYYKVWSNLRESKTEVLQYFLNWDEKKCREEWEAKDDTVFVEALEKVGVFQRLRSMTSAGLQGPQYVKLQFSRHHRQLRSRYELSLGMHLRDQLALGVTPSKVPHWTAFLSMLIGLFCNKTFRQKLEYLLEQISEVWLLPHWLDLANVEVLAADNTRVPLYMLMVAVHKELDSDDVPDGRFDILLCRDSSREVGE.

Residues 1-175 form the Helicase ATP-binding domain; sequence MADTPSVAVQ…LQRIGLTGLA (175 aa). 11–18 serves as a coordination point for ATP; the sequence is APPGYGKT. Residues 121 to 124 carry the DEAH box motif; it reads DEFH. The 150-residue stretch at 232-381 folds into the Helicase C-terminal domain; it reads KLLLALFEIE…EFYGLESKKG (150 aa). Residues 455 to 634 are compositionally biased toward low complexity; it reads ANASTNATTN…ATTTESTNAS (180 aa). Residues 455-658 form a disordered region; that stretch reads ANASTNATTN…RFHPVTDINK (204 aa). Positions 635-658 are enriched in basic and acidic residues; the sequence is AKEDANKDGNAEDNRFHPVTDINK.

The protein belongs to the helicase family. Yeast subtelomeric Y' repeat subfamily.

Catalyzes DNA unwinding and is involved in telomerase-independent telomere maintenance. This chain is Y' element ATP-dependent helicase YPR204W, found in Saccharomyces cerevisiae (strain ATCC 204508 / S288c) (Baker's yeast).